A 127-amino-acid polypeptide reads, in one-letter code: Major sperm protein 2 (127 aa).

Residue Ala-2 is modified to N-acetylalanine. Residues 9–126 (DIHTQPGSKI…RRKNLPIEYN (118 aa)) enclose the MSP domain.

As to expression, sperm.

It is found in the cell projection. The protein localises to the pseudopodium. It localises to the cytoplasm. The protein resides in the cytoskeleton. Functionally, central component in molecular interactions underlying sperm crawling. Forms an extensive filament system that extends from sperm villipoda, along the leading edge of the pseudopod. This is Major sperm protein 2 from Onchocerca volvulus.